The following is a 373-amino-acid chain: Histidinol-phosphate aminotransferase (373 aa).

The span at 1-10 (MTGVPGSSIT) shows a compositional bias: polar residues. Positions 1–45 (MTGVPGSSITLDDLPLRDDLRGKSPYGAPQLSVPVRLNTNENPHP) are disordered. Lys-237 carries the post-translational modification N6-(pyridoxal phosphate)lysine.

It belongs to the class-II pyridoxal-phosphate-dependent aminotransferase family. Histidinol-phosphate aminotransferase subfamily. In terms of assembly, homodimer. The cofactor is pyridoxal 5'-phosphate.

It catalyses the reaction L-histidinol phosphate + 2-oxoglutarate = 3-(imidazol-4-yl)-2-oxopropyl phosphate + L-glutamate. It participates in amino-acid biosynthesis; L-histidine biosynthesis; L-histidine from 5-phospho-alpha-D-ribose 1-diphosphate: step 7/9. This Mycolicibacterium vanbaalenii (strain DSM 7251 / JCM 13017 / BCRC 16820 / KCTC 9966 / NRRL B-24157 / PYR-1) (Mycobacterium vanbaalenii) protein is Histidinol-phosphate aminotransferase.